We begin with the raw amino-acid sequence, 431 residues long: Glutamate-1-semialdehyde 2,1-aminomutase (431 aa).

An N6-(pyridoxal phosphate)lysine modification is found at Lys-265.

This sequence belongs to the class-III pyridoxal-phosphate-dependent aminotransferase family. HemL subfamily. In terms of assembly, homodimer. Pyridoxal 5'-phosphate serves as cofactor.

It is found in the cytoplasm. The enzyme catalyses (S)-4-amino-5-oxopentanoate = 5-aminolevulinate. It functions in the pathway porphyrin-containing compound metabolism; protoporphyrin-IX biosynthesis; 5-aminolevulinate from L-glutamyl-tRNA(Glu): step 2/2. This Vibrio campbellii (strain ATCC BAA-1116) protein is Glutamate-1-semialdehyde 2,1-aminomutase.